The sequence spans 345 residues: Phenylalanine--tRNA ligase alpha subunit (345 aa).

Glu-259 provides a ligand contact to Mg(2+).

It belongs to the class-II aminoacyl-tRNA synthetase family. Phe-tRNA synthetase alpha subunit type 1 subfamily. Tetramer of two alpha and two beta subunits. Requires Mg(2+) as cofactor.

It localises to the cytoplasm. It carries out the reaction tRNA(Phe) + L-phenylalanine + ATP = L-phenylalanyl-tRNA(Phe) + AMP + diphosphate + H(+). In Nitrosomonas europaea (strain ATCC 19718 / CIP 103999 / KCTC 2705 / NBRC 14298), this protein is Phenylalanine--tRNA ligase alpha subunit.